Consider the following 247-residue polypeptide: PHD finger protein ALFIN-LIKE 3 (247 aa).

A disordered region spans residues 147 to 178 (DRSGVDSSGKSKHSTKRTGEGQVKRSRVVAEE). The PHD-type zinc finger occupies 188-240 (ETFCGTCGGLYNANEFWIGCDICERWFHGKCVRITPAKAEHIKHYKCPDCSSS).

This sequence belongs to the Alfin family. In terms of assembly, interacts with H3K4me3 and to a lesser extent with H3K4me2.

The protein localises to the nucleus. Histone-binding component that specifically recognizes H3 tails trimethylated on 'Lys-4' (H3K4me3), which mark transcription start sites of virtually all active genes. This is PHD finger protein ALFIN-LIKE 3 from Oryza sativa subsp. indica (Rice).